A 311-amino-acid polypeptide reads, in one-letter code: Tyrosine recombinase XerC (311 aa).

In terms of domain architecture, Core-binding (CB) spans 14 to 100 (ESLNETAKKF…SLRTFYKVLL (87 aa)). The region spanning 121-303 (EVPKNFRINE…SKEKIKEVYR (183 aa)) is the Tyr recombinase domain. Active-site residues include Arg-163, Lys-187, His-255, Arg-258, and His-281. The O-(3'-phospho-DNA)-tyrosine intermediate role is filled by Tyr-290.

This sequence belongs to the 'phage' integrase family. XerC subfamily. Forms a cyclic heterotetrameric complex composed of two molecules of XerC and two molecules of XerD.

It is found in the cytoplasm. In terms of biological role, site-specific tyrosine recombinase, which acts by catalyzing the cutting and rejoining of the recombining DNA molecules. The XerC-XerD complex is essential to convert dimers of the bacterial chromosome into monomers to permit their segregation at cell division. It also contributes to the segregational stability of plasmids. In Leptospira interrogans serogroup Icterohaemorrhagiae serovar copenhageni (strain Fiocruz L1-130), this protein is Tyrosine recombinase XerC.